The following is a 497-amino-acid chain: Pseudooxynicotine dehydrogenase (497 aa).

The segment at residues 1–43 is a signal peptide (tat-type signal); sequence MANDKGDISKDGVSRRKFLGGAVIGAAAAAGVGSQILSLSATA. Residues Ala70, Glu89, Arg97, Trp114, Val286, Ser462, and Ile472 each contribute to the FAD site.

The protein belongs to the flavin monoamine oxidase family. As to quaternary structure, homodimer. FAD is required as a cofactor. In terms of processing, predicted to be exported by the Tat system. The position of the signal peptide cleavage has not been experimentally proven.

The protein localises to the periplasm. The catalysed reaction is pseudooxynicotine + 2 Fe(III)-[cytochrome c] + H2O = 4-oxo-4-(pyridin-3-yl)butanal + methylamine + 2 Fe(II)-[cytochrome c] + 2 H(+). It participates in alkaloid degradation; nicotine degradation. With respect to regulation, strongly inhibited by Ag(+), Co(2+), Cu(2+) and Hg(2+). Functionally, involved in nicotine degradation. Catalyzes the deamination of pseudooxynicotine to 3-succinoylsemialdehyde-pyridine. This Pseudomonas sp protein is Pseudooxynicotine dehydrogenase.